The sequence spans 157 residues: 6,7-dimethyl-8-ribityllumazine synthase (157 aa).

Residues phenylalanine 22, 56-58 (AME), and 80-82 (AVV) each bind 5-amino-6-(D-ribitylamino)uracil. Residue 85-86 (ET) coordinates (2S)-2-hydroxy-3-oxobutyl phosphate. The active-site Proton donor is histidine 88. Phenylalanine 113 serves as a coordination point for 5-amino-6-(D-ribitylamino)uracil. Position 127 (arginine 127) interacts with (2S)-2-hydroxy-3-oxobutyl phosphate.

The protein belongs to the DMRL synthase family.

The catalysed reaction is (2S)-2-hydroxy-3-oxobutyl phosphate + 5-amino-6-(D-ribitylamino)uracil = 6,7-dimethyl-8-(1-D-ribityl)lumazine + phosphate + 2 H2O + H(+). It functions in the pathway cofactor biosynthesis; riboflavin biosynthesis; riboflavin from 2-hydroxy-3-oxobutyl phosphate and 5-amino-6-(D-ribitylamino)uracil: step 1/2. Functionally, catalyzes the formation of 6,7-dimethyl-8-ribityllumazine by condensation of 5-amino-6-(D-ribitylamino)uracil with 3,4-dihydroxy-2-butanone 4-phosphate. This is the penultimate step in the biosynthesis of riboflavin. This Levilactobacillus brevis (strain ATCC 367 / BCRC 12310 / CIP 105137 / JCM 1170 / LMG 11437 / NCIMB 947 / NCTC 947) (Lactobacillus brevis) protein is 6,7-dimethyl-8-ribityllumazine synthase.